Reading from the N-terminus, the 261-residue chain is Ribosomal RNA small subunit methyltransferase A (261 aa).

S-adenosyl-L-methionine is bound by residues H13, L15, G40, E61, D85, and N105.

This sequence belongs to the class I-like SAM-binding methyltransferase superfamily. rRNA adenine N(6)-methyltransferase family. RsmA subfamily.

The protein localises to the cytoplasm. The enzyme catalyses adenosine(1518)/adenosine(1519) in 16S rRNA + 4 S-adenosyl-L-methionine = N(6)-dimethyladenosine(1518)/N(6)-dimethyladenosine(1519) in 16S rRNA + 4 S-adenosyl-L-homocysteine + 4 H(+). Its function is as follows. Specifically dimethylates two adjacent adenosines (A1518 and A1519) in the loop of a conserved hairpin near the 3'-end of 16S rRNA in the 30S particle. May play a critical role in biogenesis of 30S subunits. This Flavobacterium johnsoniae (strain ATCC 17061 / DSM 2064 / JCM 8514 / BCRC 14874 / CCUG 350202 / NBRC 14942 / NCIMB 11054 / UW101) (Cytophaga johnsonae) protein is Ribosomal RNA small subunit methyltransferase A.